We begin with the raw amino-acid sequence, 126 residues long: Glycine cleavage system H protein (126 aa).

The region spanning 22–104 is the Lipoyl-binding domain; it reads VATVGITEYA…YEKAWMVKIE (83 aa). Lys63 bears the N6-lipoyllysine mark.

The protein belongs to the GcvH family. As to quaternary structure, the glycine cleavage system is composed of four proteins: P, T, L and H. (R)-lipoate serves as cofactor.

Its function is as follows. The glycine cleavage system catalyzes the degradation of glycine. The H protein shuttles the methylamine group of glycine from the P protein to the T protein. Functionally, is also involved in protein lipoylation via its role as an octanoyl/lipoyl carrier protein intermediate. The protein is Glycine cleavage system H protein of Staphylococcus epidermidis (strain ATCC 12228 / FDA PCI 1200).